The following is a 487-amino-acid chain: UDP-N-acetylmuramoyl-L-alanyl-D-glutamate--2,6-diaminopimelate ligase (487 aa).

2 residues coordinate UDP-N-acetyl-alpha-D-muramoyl-L-alanyl-D-glutamate: Leu-23 and Ser-25. 108–114 (GTNGKTS) lines the ATP pocket. Residues 150-151 (TT), Ser-177, Gln-183, and Arg-185 each bind UDP-N-acetyl-alpha-D-muramoyl-L-alanyl-D-glutamate. The residue at position 217 (Lys-217) is an N6-carboxylysine. Residues Arg-378, 402 to 405 (DNPR), Gly-453, and Glu-457 each bind meso-2,6-diaminopimelate. A Meso-diaminopimelate recognition motif motif is present at residues 402–405 (DNPR).

The protein belongs to the MurCDEF family. MurE subfamily. Mg(2+) serves as cofactor. Post-translationally, carboxylation is probably crucial for Mg(2+) binding and, consequently, for the gamma-phosphate positioning of ATP.

The protein localises to the cytoplasm. It carries out the reaction UDP-N-acetyl-alpha-D-muramoyl-L-alanyl-D-glutamate + meso-2,6-diaminopimelate + ATP = UDP-N-acetyl-alpha-D-muramoyl-L-alanyl-gamma-D-glutamyl-meso-2,6-diaminopimelate + ADP + phosphate + H(+). It participates in cell wall biogenesis; peptidoglycan biosynthesis. Its function is as follows. Catalyzes the addition of meso-diaminopimelic acid to the nucleotide precursor UDP-N-acetylmuramoyl-L-alanyl-D-glutamate (UMAG) in the biosynthesis of bacterial cell-wall peptidoglycan. This is UDP-N-acetylmuramoyl-L-alanyl-D-glutamate--2,6-diaminopimelate ligase from Pseudomonas aeruginosa (strain ATCC 15692 / DSM 22644 / CIP 104116 / JCM 14847 / LMG 12228 / 1C / PRS 101 / PAO1).